The sequence spans 137 residues: Crustacean calcium-binding protein 23 (137 aa).

3 consecutive EF-hand domains span residues 27–48 (RDSSWTLSKEELSRGVSQFGLD), 62–97 (EKKAAVEAAFKHLDKTGDGVVTVEDIKGVYSAKVVK), and 100–135 (ATEEEILKKFLNMFESSTSVDGKVTKKEFLDYYSGL).

As to quaternary structure, monomer or disulfide-linked dimers.

Its function is as follows. Possibly acts as a regulatory protein and not as a calcium buffer or transport protein. In Homarus americanus (American lobster), this protein is Crustacean calcium-binding protein 23.